The sequence spans 355 residues: Heterogeneous nuclear ribonucleoprotein D0 (355 aa).

A disordered region spans residues 1 to 92 (MSEEQFGGDG…SPRHSEAATA (92 aa)). Position 2 is an N-acetylserine (Ser-2). Low complexity-rich tracts occupy residues 11–20 (AAAAATAAVG) and 27–42 (EGAM…AAAG). Over residues 43–58 (SGAGTGGGTASGGTEG) the composition is skewed to gly residues. The segment covering 64-73 (EGAKIDASKN) has biased composition (basic and acidic residues). At Ser-71 the chain carries Phosphoserine. A Glycyl lysine isopeptide (Lys-Gly) (interchain with G-Cter in SUMO2) cross-link involves residue Lys-72. 3 positions are modified to phosphoserine: Ser-80, Ser-82, and Ser-83. Thr-91 bears the Phosphothreonine mark. RRM domains are found at residues 97–179 (WKMF…KTKE) and 182–261 (KKIF…MSKE). Lys-119 bears the N6-methyllysine mark. Thr-127 is subject to Phosphothreonine. Lys-129 participates in a covalent cross-link: Glycyl lysine isopeptide (Lys-Gly) (interchain with G-Cter in SUMO2). Lys-165 carries the post-translational modification N6-acetyllysine. At Ser-190 the chain carries Phosphoserine. Position 193 is a phosphothreonine (Thr-193). Lys-197 is covalently cross-linked (Glycyl lysine isopeptide (Lys-Gly) (interchain with G-Cter in SUMO2)). Residues Lys-243 and Lys-251 each carry the N6-acetyllysine modification. Tyr-263 bears the Omega-N-methylarginine mark. The residue at position 271 (Ser-271) is a Phosphoserine. An Omega-N-methylarginine modification is found at Arg-272. Position 273 is an N6-acetyllysine (Gly-273). Arg-278, Arg-280, and Arg-282 each carry omega-N-methylarginine. Gln-292 is subject to N6-acetyllysine. Arg-345 is subject to Asymmetric dimethylarginine; alternate. Arg-345 bears the Dimethylated arginine; alternate mark. Position 345 is an omega-N-methylarginine; alternate (Arg-345).

Identified in a IGF2BP1-dependent mRNP granule complex containing untranslated mRNAs. Part of a complex associated with the FOS mCRD domain and consisting of PABPC1, PAIP1, CSDE1/UNR and SYNCRIP. Interacts with IGF2BP2. Interacts with GTPBP1. Interacts with EIF4G1; the interaction requires RNA. Interacts with EIF3B and RPS3. Arg-345 is dimethylated, probably to asymmetric dimethylarginine. In terms of processing, methylated by PRMT1, in an insulin-dependent manner. The PRMT1-mediated methylation regulates tyrosine phosphorylation.

It is found in the nucleus. It localises to the cytoplasm. Its function is as follows. Binds with high affinity to RNA molecules that contain AU-rich elements (AREs) found within the 3'-UTR of many proto-oncogenes and cytokine mRNAs. Also binds to double- and single-stranded DNA sequences in a specific manner and functions a transcription factor. Each of the RNA-binding domains specifically can bind solely to a single-stranded non-monotonous 5'-UUAG-3' sequence and also weaker to the single-stranded 5'-TTAGGG-3' telomeric DNA repeat. Binds RNA oligonucleotides with 5'-UUAGGG-3' repeats more tightly than the telomeric single-stranded DNA 5'-TTAGGG-3' repeats. Binding of RRM1 to DNA inhibits the formation of DNA quadruplex structure which may play a role in telomere elongation. May be involved in translationally coupled mRNA turnover. Implicated with other RNA-binding proteins in the cytoplasmic deadenylation/translational and decay interplay of the FOS mRNA mediated by the major coding-region determinant of instability (mCRD) domain. May play a role in the regulation of the rhythmic expression of circadian clock core genes. Directly binds to the 3'UTR of CRY1 mRNA and induces CRY1 rhythmic translation. May also be involved in the regulation of PER2 translation. In Homo sapiens (Human), this protein is Heterogeneous nuclear ribonucleoprotein D0 (HNRNPD).